The chain runs to 299 residues: Tyrosine recombinase XerC (299 aa).

A Core-binding (CB) domain is found at methionine 1–glutamine 81. The Tyr recombinase domain maps to leucine 102–aspartate 281. Active-site residues include arginine 142, lysine 166, histidine 233, arginine 236, and histidine 259. The active-site O-(3'-phospho-DNA)-tyrosine intermediate is the tyrosine 268.

This sequence belongs to the 'phage' integrase family. XerC subfamily. Forms a cyclic heterotetrameric complex composed of two molecules of XerC and two molecules of XerD.

It localises to the cytoplasm. In terms of biological role, site-specific tyrosine recombinase, which acts by catalyzing the cutting and rejoining of the recombining DNA molecules. The XerC-XerD complex is essential to convert dimers of the bacterial chromosome into monomers to permit their segregation at cell division. It also contributes to the segregational stability of plasmids. The protein is Tyrosine recombinase XerC of Chromobacterium violaceum (strain ATCC 12472 / DSM 30191 / JCM 1249 / CCUG 213 / NBRC 12614 / NCIMB 9131 / NCTC 9757 / MK).